The following is a 706-amino-acid chain: Vitamin B12-dependent ribonucleoside-diphosphate reductase (706 aa).

Residues 21 to 109 enclose the ATP-cone domain; that stretch reads AKVRRRDGTL…IYRQRRAELR (89 aa). Substrate is bound by residues Ser191, 206-207, Gly235, 389-393, and 534-538; these read GC, NPCGE, and PTGTI. Cys207 and Cys402 are disulfide-bonded. Asn389 acts as the Proton acceptor in catalysis. The active-site Cysteine radical intermediate is the Cys391. The active-site Proton acceptor is Glu393.

This sequence belongs to the ribonucleoside diphosphate reductase class-2 family. Requires adenosylcob(III)alamin as cofactor.

The enzyme catalyses a 2'-deoxyribonucleoside 5'-diphosphate + [thioredoxin]-disulfide + H2O = a ribonucleoside 5'-diphosphate + [thioredoxin]-dithiol. Its function is as follows. Provides the precursors necessary for DNA synthesis. Catalyzes the biosynthesis of deoxyribonucleotides from the corresponding ribonucleotides. This is Vitamin B12-dependent ribonucleoside-diphosphate reductase (nrdZ) from Mycobacterium tuberculosis (strain ATCC 25618 / H37Rv).